The following is a 406-amino-acid chain: Cysteine desulfurase (406 aa).

At Lys226 the chain carries N6-(pyridoxal phosphate)lysine. The active-site Cysteine persulfide intermediate is Cys364.

It belongs to the class-V pyridoxal-phosphate-dependent aminotransferase family. Csd subfamily. In terms of assembly, homodimer. Interacts with SufE and the SufBCD complex composed of SufB, SufC and SufD. The interaction with SufE is required to mediate the direct transfer of the sulfur atom from the S-sulfanylcysteine. Requires pyridoxal 5'-phosphate as cofactor.

It is found in the cytoplasm. The enzyme catalyses (sulfur carrier)-H + L-cysteine = (sulfur carrier)-SH + L-alanine. It catalyses the reaction L-selenocysteine + AH2 = hydrogenselenide + L-alanine + A + H(+). It functions in the pathway cofactor biosynthesis; iron-sulfur cluster biosynthesis. Functionally, cysteine desulfurases mobilize the sulfur from L-cysteine to yield L-alanine, an essential step in sulfur metabolism for biosynthesis of a variety of sulfur-containing biomolecules. Component of the suf operon, which is activated and required under specific conditions such as oxidative stress and iron limitation. Acts as a potent selenocysteine lyase in vitro, that mobilizes selenium from L-selenocysteine. Selenocysteine lyase activity is however unsure in vivo. The polypeptide is Cysteine desulfurase (Shigella sonnei (strain Ss046)).